The sequence spans 100 residues: High mobility group protein C (100 aa).

The segment at residues 12 to 80 (PKRPLSAFFL…KYEKDMQAYE (69 aa)) is a DNA-binding region (HMG box). Residues 81–100 (KKYGKPEKQKKIKKNKKGSK) form a disordered region. The segment covering 90-100 (KKIKKNKKGSK) has biased composition (basic residues).

Its subcellular location is the nucleus. The protein resides in the chromosome. In Tetrahymena thermophila, this protein is High mobility group protein C.